The primary structure comprises 226 residues: NADH-ubiquinone oxidoreductase 19.3 kDa subunit, mitochondrial (226 aa).

The tract at residues 40-68 (ATGAVAPAGAQHGIARRERREVPLPSQEG) is disordered. [4Fe-4S] cluster is bound by residues cysteine 101, cysteine 102, cysteine 166, and cysteine 196.

Belongs to the complex I 20 kDa subunit family. In terms of assembly, complex I is composed of about 40 different subunits. This is a component of the iron-sulfur (IP) fragment of the enzyme. The cofactor is [4Fe-4S] cluster.

Its subcellular location is the mitochondrion. The enzyme catalyses a ubiquinone + NADH + 5 H(+)(in) = a ubiquinol + NAD(+) + 4 H(+)(out). Functionally, core subunit of the mitochondrial membrane respiratory chain NADH dehydrogenase (Complex I) that is believed to belong to the minimal assembly required for catalysis. Complex I functions in the transfer of electrons from NADH to the respiratory chain. The immediate electron acceptor for the enzyme is believed to be ubiquinone. In Neurospora crassa (strain ATCC 24698 / 74-OR23-1A / CBS 708.71 / DSM 1257 / FGSC 987), this protein is NADH-ubiquinone oxidoreductase 19.3 kDa subunit, mitochondrial.